The following is a 234-amino-acid chain: NLP effector protein Pc576423 (234 aa).

A signal peptide spans 1 to 18 (MNLRAIAVTFATFAGANA). Residues Asn35 and Asn66 are each glycosylated (N-linked (GlcNAc...) asparagine). The short motif at 119–125 (GHRHDWE) is the Hepta-peptide GHRHDWE motif element.

Belongs to the Necrosis inducing protein (NPP1) family.

Its subcellular location is the secreted. In terms of biological role, secreted effector that contributes strongly to virulence during infection by P.capsici. This chain is NLP effector protein Pc576423, found in Phytophthora capsici.